The following is a 597-amino-acid chain: Arginine--tRNA ligase (597 aa).

The 'HIGH' region signature appears at 124–134; sequence PNVAKPLHVGH.

It belongs to the class-I aminoacyl-tRNA synthetase family. Monomer.

The protein resides in the cytoplasm. It catalyses the reaction tRNA(Arg) + L-arginine + ATP = L-arginyl-tRNA(Arg) + AMP + diphosphate. The protein is Arginine--tRNA ligase of Agathobacter rectalis (strain ATCC 33656 / DSM 3377 / JCM 17463 / KCTC 5835 / VPI 0990) (Eubacterium rectale).